A 112-amino-acid chain; its full sequence is Colipase (112 aa).

A signal peptide spans 1–17; it reads MEKILILLLVALSVAYA. The propeptide at 18–22 is enterostatin, activation peptide; that stretch reads APGPR. 5 disulfides stabilise this stretch: cysteine 34-cysteine 45, cysteine 40-cysteine 56, cysteine 44-cysteine 78, cysteine 66-cysteine 86, and cysteine 80-cysteine 104.

It belongs to the colipase family. In terms of assembly, forms a 1:1 stoichiometric complex with pancreatic lipase. As to expression, expressed by the pancreas.

Its subcellular location is the secreted. In terms of biological role, colipase is a cofactor of pancreatic lipase. It allows the lipase to anchor itself to the lipid-water interface. Without colipase the enzyme is washed off by bile salts, which have an inhibitory effect on the lipase. Enterostatin has a biological activity as a satiety signal. The chain is Colipase from Homo sapiens (Human).